A 145-amino-acid chain; its full sequence is Cytochrome b (145 aa).

The chain crosses the membrane as a helical span at residues 38 to 58 (FFALHFLLPFVLAALALMHLI). Residues H42 and H56 each contribute to the heme b site. Residue H61 participates in a ubiquinone binding. The chain crosses the membrane as a helical span at residues 85-105 (FIFKDLVTIFIFFIVLSIFVF).

Belongs to the cytochrome b family. In terms of assembly, fungal cytochrome b-c1 complex contains 10 subunits; 3 respiratory subunits, 2 core proteins and 5 low-molecular weight proteins. Cytochrome b-c1 complex is a homodimer. Heme b serves as cofactor.

It is found in the mitochondrion inner membrane. In terms of biological role, component of the ubiquinol-cytochrome c reductase complex (complex III or cytochrome b-c1 complex) that is part of the mitochondrial respiratory chain. The b-c1 complex mediates electron transfer from ubiquinol to cytochrome c. Contributes to the generation of a proton gradient across the mitochondrial membrane that is then used for ATP synthesis. This chain is Cytochrome b (cob), found in Aspergillus flavus.